The following is a 166-amino-acid chain: MAHGRQQDELQDITLLGNQDNTYNFDYRPDVLESFDNKHQGRDYFVKFNCPEFTSLCPITGQPDFATIYISYIPNVKMVESKSLKLYLFSFRNHGDFHEDCMNIIMNDLIELMDPHYIEVWGKFTPRGGISIDPYTNYGRPNSKYEKMAEHRLMNHDLYPEKIDNR.

The Thioimide intermediate role is filled by Cys57. Asp64 (proton donor) is an active-site residue. Residues 79 to 81 (VES) and 98 to 99 (HE) contribute to the substrate site.

Belongs to the GTP cyclohydrolase I family. QueF type 1 subfamily.

Its subcellular location is the cytoplasm. It catalyses the reaction 7-aminomethyl-7-carbaguanine + 2 NADP(+) = 7-cyano-7-deazaguanine + 2 NADPH + 3 H(+). Its pathway is tRNA modification; tRNA-queuosine biosynthesis. Functionally, catalyzes the NADPH-dependent reduction of 7-cyano-7-deazaguanine (preQ0) to 7-aminomethyl-7-deazaguanine (preQ1). The sequence is that of NADPH-dependent 7-cyano-7-deazaguanine reductase from Staphylococcus aureus (strain JH1).